Here is a 235-residue protein sequence, read N- to C-terminus: Biosynthetic peptidoglycan transglycosylase (235 aa).

A helical transmembrane segment spans residues 12 to 34 (GLGKLLLAALLSTIVSVALLRFI).

It belongs to the glycosyltransferase 51 family.

It is found in the cell inner membrane. The catalysed reaction is [GlcNAc-(1-&gt;4)-Mur2Ac(oyl-L-Ala-gamma-D-Glu-L-Lys-D-Ala-D-Ala)](n)-di-trans,octa-cis-undecaprenyl diphosphate + beta-D-GlcNAc-(1-&gt;4)-Mur2Ac(oyl-L-Ala-gamma-D-Glu-L-Lys-D-Ala-D-Ala)-di-trans,octa-cis-undecaprenyl diphosphate = [GlcNAc-(1-&gt;4)-Mur2Ac(oyl-L-Ala-gamma-D-Glu-L-Lys-D-Ala-D-Ala)](n+1)-di-trans,octa-cis-undecaprenyl diphosphate + di-trans,octa-cis-undecaprenyl diphosphate + H(+). Its pathway is cell wall biogenesis; peptidoglycan biosynthesis. Peptidoglycan polymerase that catalyzes glycan chain elongation from lipid-linked precursors. This is Biosynthetic peptidoglycan transglycosylase from Aeromonas hydrophila subsp. hydrophila (strain ATCC 7966 / DSM 30187 / BCRC 13018 / CCUG 14551 / JCM 1027 / KCTC 2358 / NCIMB 9240 / NCTC 8049).